The primary structure comprises 1786 residues: Laminin subunit beta-1 (1786 aa).

Positions 1 to 21 (MGLLQVFAFGVLALWGTRVCA) are cleaved as a signal peptide. The Laminin N-terminal domain maps to 31–270 (AEGSCYPATG…AVYDMVVRGN (240 aa)). Asn120 carries N-linked (GlcNAc...) asparagine glycosylation. Ser250 is subject to Phosphoserine. Intrachain disulfides connect Cys271/Cys280, Cys273/Cys298, Cys300/Cys309, Cys312/Cys332, Cys335/Cys344, Cys337/Cys362, Cys365/Cys374, Cys377/Cys395, Cys398/Cys411, Cys400/Cys426, Cys428/Cys437, Cys440/Cys455, Cys458/Cys472, Cys460/Cys479, Cys481/Cys490, Cys493/Cys507, Cys510/Cys522, Cys512/Cys529, and Cys531/Cys540. 4 Laminin EGF-like domains span residues 271-334 (CFCY…ACKK), 335-397 (CNCN…LCEP), 398-457 (CTCD…GCKS), and 458-509 (CACN…GCRP). Asn356 carries an N-linked (GlcNAc...) asparagine glycan. One can recognise a Laminin EGF-like 5; truncated domain in the interval 510 to 540 (CDCDLGGALNNSCSEDSGQCSCLPHMIGRQC). Asn519 carries N-linked (GlcNAc...) asparagine glycosylation. The region spanning 549–767 (FTTLDHYIYE…IIFSISALIH (219 aa)) is the Laminin IV type B domain. N-linked (GlcNAc...) asparagine glycosylation occurs at Asn677. 32 disulfides stabilise this stretch: Cys773-Cys785, Cys775-Cys792, Cys794-Cys803, Cys806-Cys818, Cys821-Cys833, Cys823-Cys840, Cys842-Cys851, Cys854-Cys864, Cys867-Cys876, Cys869-Cys883, Cys886-Cys895, Cys898-Cys914, Cys917-Cys933, Cys919-Cys944, Cys946-Cys955, Cys958-Cys973, Cys976-Cys990, Cys978-Cys997, Cys1000-Cys1009, Cys1012-Cys1025, Cys1028-Cys1040, Cys1030-Cys1054, Cys1056-Cys1065, Cys1068-Cys1081, Cys1084-Cys1096, Cys1086-Cys1103, Cys1105-Cys1114, Cys1117-Cys1129, Cys1132-Cys1144, Cys1134-Cys1151, Cys1153-Cys1162, and Cys1165-Cys1176. Laminin EGF-like domains follow at residues 773–820 (CECD…GCKP), 821–866 (CDCH…SCQP), 867–916 (CQCN…HCRP), 917–975 (CPCP…SCQP), 976–1027 (CQCH…DCRK), 1028–1083 (CVCN…GCGP), 1084–1131 (CNCN…ECRA), and 1132–1178 (CDCD…DCTP). Residue Asn1041 is glycosylated (N-linked (GlcNAc...) asparagine). A domain II region spans residues 1179 to 1397 (CHQCFALWDA…LDLSAVAQMT (219 aa)). Residues Asn1195, Asn1279, Asn1336, and Asn1343 are each glycosylated (N-linked (GlcNAc...) asparagine). The stretch at 1216 to 1315 (YRETVDSVEK…LEFIKNSDIQ (100 aa)) forms a coiled coil. A coiled-coil region spans residues 1368–1388 (KEQQEEQARLLDELAGKLQSL). A domain alpha region spans residues 1398 to 1430 (CGTPPGADCSESECGGPNCRTDEGEKKCGGPGC). The tract at residues 1431–1786 (GGLVTVAHSA…EKVAVYSTCL (356 aa)) is domain I. Residues 1448 to 1778 (DRDVLSALAE…RSLLKDISEK (331 aa)) are a coiled coil. N-linked (GlcNAc...) asparagine glycosylation occurs at Asn1487. Ser1496 bears the Phosphoserine mark. N-linked (GlcNAc...) asparagine glycosylation is found at Asn1542 and Asn1643. At Ser1666 the chain carries Phosphoserine.

As to quaternary structure, laminin is a complex glycoprotein, consisting of three different polypeptide chains (alpha, beta, gamma), which are bound to each other by disulfide bonds into a cross-shaped molecule comprising one long and three short arms with globules at each end. Beta-1 is a subunit of laminin-1 (laminin-111 or EHS laminin), laminin-2 (laminin-211 or merosin), laminin-6 (laminin-311 or K-laminin), laminin-8 (laminin-411), laminin-10 (laminin-511) and laminin-12 (laminin-213). Interacts with ITGB1. Widely expressed in the embryo. High levels are detected in the cerebellar basement membrane, at postnatal day 7.

The protein resides in the secreted. It localises to the extracellular space. The protein localises to the extracellular matrix. Its subcellular location is the basement membrane. Binding to cells via a high affinity receptor, laminin is thought to mediate the attachment, migration and organization of cells into tissues during embryonic development by interacting with other extracellular matrix components. Involved in the organization of the laminar architecture of the cerebral cortex. It is probably required for the integrity of the basement membrane/glia limitans that serves as an anchor point for the endfeet of radial glial cells and as a physical barrier to migrating neurons. Radial glial cells play a central role in cerebral cortical development, where they act both as the proliferative unit of the cerebral cortex and a scaffold for neurons migrating toward the pial surface. This Mus musculus (Mouse) protein is Laminin subunit beta-1 (Lamb1).